A 265-amino-acid chain; its full sequence is Metallo-beta-lactamase VIM-7 (265 aa).

The first 17 residues, 1–17 (MFQIRSFLVGISAFVMA), serve as a signal peptide directing secretion. Histidine 113, histidine 115, aspartate 117, histidine 178, cysteine 197, and histidine 239 together coordinate Zn(2+).

This sequence belongs to the metallo-beta-lactamase superfamily. Class-B beta-lactamase family. As to quaternary structure, monomer. Requires Zn(2+) as cofactor.

Its subcellular location is the periplasm. It catalyses the reaction a beta-lactam + H2O = a substituted beta-amino acid. In terms of biological role, class B beta-lactamase which confers resistance to the beta-lactam antibiotics, including penicillins, cephalosporins and carbapenems. Acts via hydrolysis of the beta-lactam ring. Has penicillin-, cephalosporin- and carbapenem-hydrolyzing activities. The sequence is that of Metallo-beta-lactamase VIM-7 from Pseudomonas aeruginosa.